Here is a 162-residue protein sequence, read N- to C-terminus: Phosphopantetheine adenylyltransferase (162 aa).

S11 contributes to the substrate binding site. ATP is bound by residues 11 to 12 (SF) and H19. Substrate contacts are provided by K43, V76, and R90. ATP is bound by residues 91-93 (GLR), E101, and 126-132 (HLYISSS).

Belongs to the bacterial CoaD family. In terms of assembly, homohexamer. Requires Mg(2+) as cofactor.

It localises to the cytoplasm. The catalysed reaction is (R)-4'-phosphopantetheine + ATP + H(+) = 3'-dephospho-CoA + diphosphate. It functions in the pathway cofactor biosynthesis; coenzyme A biosynthesis; CoA from (R)-pantothenate: step 4/5. Reversibly transfers an adenylyl group from ATP to 4'-phosphopantetheine, yielding dephospho-CoA (dPCoA) and pyrophosphate. This chain is Phosphopantetheine adenylyltransferase, found in Streptococcus pneumoniae (strain CGSP14).